The following is a 506-amino-acid chain: Maturase K (506 aa).

It belongs to the intron maturase 2 family. MatK subfamily.

It is found in the plastid. The protein resides in the chloroplast. Its function is as follows. Usually encoded in the trnK tRNA gene intron. Probably assists in splicing its own and other chloroplast group II introns. This chain is Maturase K, found in Trifolium hybridum (Alsike clover).